Consider the following 160-residue polypeptide: Eukaryotic translation initiation factor 5A-2 (160 aa).

Over residues 1 to 12 the composition is skewed to basic and acidic residues; the sequence is MSDEEHHFESKA. Residues 1–21 are disordered; that stretch reads MSDEEHHFESKADAGASKTFP. Lysine 52 bears the Hypusine mark.

The protein belongs to the eIF-5A family. In terms of processing, lys-52 undergoes hypusination, a unique post-translational modification that consists in the addition of a butylamino group from spermidine to lysine side chain, leading to the formation of the unusual amino acid hypusine. eIF-5As are the only known proteins to undergo this modification, which is essential for their function.

Its function is as follows. Translation factor that promotes translation elongation and termination, particularly upon ribosome stalling at specific amino acid sequence contexts. Binds between the exit (E) and peptidyl (P) site of the ribosome and promotes rescue of stalled ribosome: specifically required for efficient translation of polyproline-containing peptides as well as other motifs that stall the ribosome. Acts as a ribosome quality control (RQC) cofactor by joining the RQC complex to facilitate peptidyl transfer during CAT tailing step. This chain is Eukaryotic translation initiation factor 5A-2, found in Solanum lycopersicum (Tomato).